A 634-amino-acid polypeptide reads, in one-letter code: Threonine--tRNA ligase (634 aa).

In terms of domain architecture, TGS spans M1 to T61. Residues D241–P532 are catalytic. Zn(2+)-binding residues include C332, H383, and H509.

The protein belongs to the class-II aminoacyl-tRNA synthetase family. As to quaternary structure, homodimer. Zn(2+) is required as a cofactor.

It is found in the cytoplasm. The enzyme catalyses tRNA(Thr) + L-threonine + ATP = L-threonyl-tRNA(Thr) + AMP + diphosphate + H(+). Its function is as follows. Catalyzes the attachment of threonine to tRNA(Thr) in a two-step reaction: L-threonine is first activated by ATP to form Thr-AMP and then transferred to the acceptor end of tRNA(Thr). Also edits incorrectly charged L-seryl-tRNA(Thr). In Francisella tularensis subsp. holarctica (strain FTNF002-00 / FTA), this protein is Threonine--tRNA ligase.